Reading from the N-terminus, the 116-residue chain is Large ribosomal subunit protein bL17 (116 aa).

The protein belongs to the bacterial ribosomal protein bL17 family. As to quaternary structure, part of the 50S ribosomal subunit. Contacts protein L32.

This Trichodesmium erythraeum (strain IMS101) protein is Large ribosomal subunit protein bL17.